Consider the following 305-residue polypeptide: D-alanine--D-alanine ligase (305 aa).

The ATP-grasp domain maps to K105 to E300. A131–T186 provides a ligand contact to ATP. D254, E267, and N269 together coordinate Mg(2+).

This sequence belongs to the D-alanine--D-alanine ligase family. It depends on Mg(2+) as a cofactor. Mn(2+) serves as cofactor.

The protein localises to the cytoplasm. It carries out the reaction 2 D-alanine + ATP = D-alanyl-D-alanine + ADP + phosphate + H(+). The protein operates within cell wall biogenesis; peptidoglycan biosynthesis. Its function is as follows. Cell wall formation. The polypeptide is D-alanine--D-alanine ligase (Nitrosomonas europaea (strain ATCC 19718 / CIP 103999 / KCTC 2705 / NBRC 14298)).